The chain runs to 865 residues: Alanine--tRNA ligase (865 aa).

Zn(2+)-binding residues include His554, His558, Cys656, and His660.

This sequence belongs to the class-II aminoacyl-tRNA synthetase family. Zn(2+) is required as a cofactor.

The protein resides in the cytoplasm. The catalysed reaction is tRNA(Ala) + L-alanine + ATP = L-alanyl-tRNA(Ala) + AMP + diphosphate. In terms of biological role, catalyzes the attachment of alanine to tRNA(Ala) in a two-step reaction: alanine is first activated by ATP to form Ala-AMP and then transferred to the acceptor end of tRNA(Ala). Also edits incorrectly charged Ser-tRNA(Ala) and Gly-tRNA(Ala) via its editing domain. This chain is Alanine--tRNA ligase, found in Idiomarina loihiensis (strain ATCC BAA-735 / DSM 15497 / L2-TR).